Reading from the N-terminus, the 77-residue chain is Acyl carrier protein (77 aa).

Positions 2 to 77 (ASIEKRIKEI…DAIDYITDHT (76 aa)) constitute a Carrier domain. S37 is modified (O-(pantetheine 4'-phosphoryl)serine).

Belongs to the acyl carrier protein (ACP) family. 4'-phosphopantetheine is transferred from CoA to a specific serine of apo-ACP by AcpS. This modification is essential for activity because fatty acids are bound in thioester linkage to the sulfhydryl of the prosthetic group.

It localises to the cytoplasm. It participates in lipid metabolism; fatty acid biosynthesis. In terms of biological role, carrier of the growing fatty acid chain in fatty acid biosynthesis. The protein is Acyl carrier protein of Geobacter sp. (strain M21).